Reading from the N-terminus, the 466-residue chain is 3-isopropylmalate dehydratase large subunit (466 aa).

Residues Cys347, Cys407, and Cys410 each coordinate [4Fe-4S] cluster.

The protein belongs to the aconitase/IPM isomerase family. LeuC type 1 subfamily. As to quaternary structure, heterodimer of LeuC and LeuD. [4Fe-4S] cluster is required as a cofactor.

The catalysed reaction is (2R,3S)-3-isopropylmalate = (2S)-2-isopropylmalate. Its pathway is amino-acid biosynthesis; L-leucine biosynthesis; L-leucine from 3-methyl-2-oxobutanoate: step 2/4. In terms of biological role, catalyzes the isomerization between 2-isopropylmalate and 3-isopropylmalate, via the formation of 2-isopropylmaleate. This chain is 3-isopropylmalate dehydratase large subunit, found in Pseudoalteromonas translucida (strain TAC 125).